A 338-amino-acid chain; its full sequence is MSDRLKPLIGTAATRPLSREEAEFAFECLFEGEATPAQMGGLLMALRTRGETVDEYAAAASVMRAKCHKVRAPHGAIDIVGTGGDGKGTLNISTATAFVVAGAGVPVAKHGNRNLSSKSGAADALTEMGLNVMIGPEQVEACLLEAGIGFMMAPMHHPAMRHVGPVRAELGTRTIFNILGPLTNPAGVKRQLTGAFSPDLIRPMAEVLSALGSEKAWLVHGGDGTDELAISAASKVAALEGGQIREFELHPEEAGLPVHPFEEIVGGTPAENAQAFRALLDGAPGAYRDAVLLNAAAALVVADRAAHLREGVEIATDSILSGAAKAKVALLARLTNAA.

Residues Gly81, 84–85, Thr89, 91–94, 109–117, and Ala121 contribute to the 5-phospho-alpha-D-ribose 1-diphosphate site; these read GD, NIST, and KHGNRNLSS. Residue Gly81 participates in anthranilate binding. Ser93 provides a ligand contact to Mg(2+). Asn112 contributes to the anthranilate binding site. Residue Arg167 coordinates anthranilate. Mg(2+) contacts are provided by Asp226 and Glu227.

Belongs to the anthranilate phosphoribosyltransferase family. Homodimer. Requires Mg(2+) as cofactor.

It catalyses the reaction N-(5-phospho-beta-D-ribosyl)anthranilate + diphosphate = 5-phospho-alpha-D-ribose 1-diphosphate + anthranilate. The protein operates within amino-acid biosynthesis; L-tryptophan biosynthesis; L-tryptophan from chorismate: step 2/5. In terms of biological role, catalyzes the transfer of the phosphoribosyl group of 5-phosphorylribose-1-pyrophosphate (PRPP) to anthranilate to yield N-(5'-phosphoribosyl)-anthranilate (PRA). The protein is Anthranilate phosphoribosyltransferase of Cereibacter sphaeroides (strain ATCC 17023 / DSM 158 / JCM 6121 / CCUG 31486 / LMG 2827 / NBRC 12203 / NCIMB 8253 / ATH 2.4.1.) (Rhodobacter sphaeroides).